The sequence spans 256 residues: Sorbitol dehydrogenase (256 aa).

NAD(+) contacts are provided by residues 15–17 (RGI), D36, 59–60 (DV), N86, Y152, K156, and 182–187 (PGVVDG). The active-site Proton acceptor is the Y152.

This sequence belongs to the short-chain dehydrogenases/reductases (SDR) family. In terms of assembly, homodimer. May function as a tetramer in vivo.

It catalyses the reaction keto-D-fructose + NADH + H(+) = D-sorbitol + NAD(+). The enzyme catalyses galactitol + NAD(+) = keto-D-tagatose + NADH + H(+). The catalysed reaction is L-iditol + NAD(+) = keto-L-sorbose + NADH + H(+). With respect to regulation, inhibited by DTT, N-bromosuccinimide and iodoacetic acid. In terms of biological role, catalyzes the oxidation of D-sorbitol (D-glucitol) to D-fructose. Can also catalyze the oxidation of galactitol to D-tagatose and the oxidation of L-iditol, with lower efficiency. The polypeptide is Sorbitol dehydrogenase (polS) (Cereibacter sphaeroides (Rhodobacter sphaeroides)).